Consider the following 427-residue polypeptide: Forkhead box protein A1-B (427 aa).

A DNA-binding region (fork-head) is located at residues 157-251; sequence KPPYSYISLI…ENGCYLRRQK (95 aa). Basic and acidic residues predominate over residues 256–272; it reads EKTQGGKGNQDGRKDHS. The tract at residues 256–336 is disordered; it reads EKTQGGKGNQ…HQNHSTHSLA (81 aa). Residues 285–302 are compositionally biased toward low complexity; sequence SSQMDSSSSMSNPSSSPQ. The span at 323–334 shows a compositional bias: polar residues; the sequence is PLSSHQNHSTHS.

As to expression, present in the vegetal pole and marginal zone but not the animal pole of gastrulae and in equal levels in the dorsal and ventral halves of both gastrulae and neurulae. At neurula stage, expressed in the notochord. During tailbud stages, expressed in the foregut, brain, hypocord, neural floor plate and in two lines of cells just dorsal and ventral to the notochord. Expressed in the adult liver.

It localises to the nucleus. In terms of biological role, probable transcription factor. The polypeptide is Forkhead box protein A1-B (foxa1-b) (Xenopus laevis (African clawed frog)).